A 208-amino-acid polypeptide reads, in one-letter code: Ciliary-associated calcium-binding coiled-coil protein 1 (208 aa).

As to expression, testis-specific. Expressed in spermatocytes and round spermatids (at protein level).

The protein resides in the cytoplasm. It localises to the cytoskeleton. The protein localises to the microtubule organizing center. Its subcellular location is the centrosome. It is found in the cell projection. The protein resides in the cilium. It localises to the flagellum. In terms of biological role, calcium-binding protein. May be involved in the control of sperm flagellar movement. The sequence is that of Ciliary-associated calcium-binding coiled-coil protein 1 from Mus musculus (Mouse).